A 351-amino-acid polypeptide reads, in one-letter code: RCC1 repeat-containing protein C10F6.04 (351 aa).

RCC1 repeat units follow at residues 1–48, 50–106, 108–162, and 163–212; these read MLLS…LLDE, SQLW…IVHA, RRRV…CVTN, and EGNL…VLQE.

It is found in the cytoplasm. The protein localises to the nucleus. This chain is RCC1 repeat-containing protein C10F6.04, found in Schizosaccharomyces pombe (strain 972 / ATCC 24843) (Fission yeast).